The following is an 85-amino-acid chain: MAHKKAGGSTRNGRDSESKRLGVKLFGGQEVKAGNILVRQRGTKFHGGENVGMGKDHTLFAKTAGKVKFEVKGPKNRKYVSIVAA.

Positions 1-22 are disordered; it reads MAHKKAGGSTRNGRDSESKRLG.

It belongs to the bacterial ribosomal protein bL27 family.

This chain is Large ribosomal subunit protein bL27, found in Teredinibacter turnerae (strain ATCC 39867 / T7901).